The chain runs to 366 residues: S-adenosylmethionine:tRNA ribosyltransferase-isomerase (366 aa).

It belongs to the QueA family. In terms of assembly, monomer.

Its subcellular location is the cytoplasm. The catalysed reaction is 7-aminomethyl-7-carbaguanosine(34) in tRNA + S-adenosyl-L-methionine = epoxyqueuosine(34) in tRNA + adenine + L-methionine + 2 H(+). It functions in the pathway tRNA modification; tRNA-queuosine biosynthesis. Transfers and isomerizes the ribose moiety from AdoMet to the 7-aminomethyl group of 7-deazaguanine (preQ1-tRNA) to give epoxyqueuosine (oQ-tRNA). In Caulobacter vibrioides (strain ATCC 19089 / CIP 103742 / CB 15) (Caulobacter crescentus), this protein is S-adenosylmethionine:tRNA ribosyltransferase-isomerase.